A 533-amino-acid polypeptide reads, in one-letter code: Aspartic proteinase sxa1 (533 aa).

The N-terminal stretch at 1–23 is a signal peptide; the sequence is MKASFFVFAISALQALQASVASA. Residues 76–434 form the Peptidase A1 domain; it reads YFANLTLGSN…DWDAQKIGLA (359 aa). N-linked (GlcNAc...) asparagine glycosylation occurs at Asn-79. The active site involves Asp-94. Asn-106, Asn-138, Asn-153, Asn-166, Asn-271, Asn-278, Asn-299, and Asn-319 each carry an N-linked (GlcNAc...) asparagine glycan. Residue Asp-325 is part of the active site. The N-linked (GlcNAc...) asparagine glycan is linked to Asn-439.

This sequence belongs to the peptidase A1 family.

Involved in degradation or processing of the mating pheromones. Its loss may cause a persistent response to the pheromones. It may cleave the mating pheromone M-factor. May be involved in processing of zymogens that are required for zygote formation. This chain is Aspartic proteinase sxa1 (sxa1), found in Schizosaccharomyces pombe (strain 972 / ATCC 24843) (Fission yeast).